Reading from the N-terminus, the 426-residue chain is Glutamate-1-semialdehyde 2,1-aminomutase (426 aa).

Lys-265 bears the N6-(pyridoxal phosphate)lysine mark.

It belongs to the class-III pyridoxal-phosphate-dependent aminotransferase family. HemL subfamily. In terms of assembly, homodimer. It depends on pyridoxal 5'-phosphate as a cofactor.

Its subcellular location is the cytoplasm. It catalyses the reaction (S)-4-amino-5-oxopentanoate = 5-aminolevulinate. It functions in the pathway porphyrin-containing compound metabolism; protoporphyrin-IX biosynthesis; 5-aminolevulinate from L-glutamyl-tRNA(Glu): step 2/2. This chain is Glutamate-1-semialdehyde 2,1-aminomutase (hemL), found in Salmonella typhimurium (strain SL1344).